A 529-amino-acid chain; its full sequence is Peptide chain release factor 3 (529 aa).

A tr-type G domain is found at 11-280; it reads AARRTFAIIS…GLVAWAPPPM (270 aa). GTP is bound by residues 20–27, 88–92, and 142–145; these read SHPDAGKT, DTPGH, and NKVD.

It belongs to the TRAFAC class translation factor GTPase superfamily. Classic translation factor GTPase family. PrfC subfamily.

The protein resides in the cytoplasm. In terms of biological role, increases the formation of ribosomal termination complexes and stimulates activities of RF-1 and RF-2. It binds guanine nucleotides and has strong preference for UGA stop codons. It may interact directly with the ribosome. The stimulation of RF-1 and RF-2 is significantly reduced by GTP and GDP, but not by GMP. The protein is Peptide chain release factor 3 of Sodalis glossinidius (strain morsitans).